A 356-amino-acid polypeptide reads, in one-letter code: S-adenosylmethionine:tRNA ribosyltransferase-isomerase (356 aa).

This sequence belongs to the QueA family. As to quaternary structure, monomer.

The protein resides in the cytoplasm. It catalyses the reaction 7-aminomethyl-7-carbaguanosine(34) in tRNA + S-adenosyl-L-methionine = epoxyqueuosine(34) in tRNA + adenine + L-methionine + 2 H(+). Its pathway is tRNA modification; tRNA-queuosine biosynthesis. In terms of biological role, transfers and isomerizes the ribose moiety from AdoMet to the 7-aminomethyl group of 7-deazaguanine (preQ1-tRNA) to give epoxyqueuosine (oQ-tRNA). This is S-adenosylmethionine:tRNA ribosyltransferase-isomerase from Serratia proteamaculans (strain 568).